The primary structure comprises 357 residues: Cytoplasmic tRNA 2-thiolation protein 1 (357 aa).

Residues 314-348 form a disordered region; that stretch reads GVSRTRGRRGEKAGLHPDVGRGGGGGSSGPAEVAS. A compositionally biased stretch (basic and acidic residues) spans 321-332; the sequence is RRGEKAGLHPDV.

It belongs to the TtcA family. CTU1/NCS6/ATPBD3 subfamily.

Its subcellular location is the cytoplasm. The protein operates within tRNA modification; 5-methoxycarbonylmethyl-2-thiouridine-tRNA biosynthesis. In terms of biological role, plays a central role in 2-thiolation of mcm(5)S(2)U at tRNA wobble positions of tRNA(Lys), tRNA(Glu) and tRNA(Gln). Directly binds tRNAs and probably acts by catalyzing adenylation of tRNAs, an intermediate required for 2-thiolation. It is unclear whether it acts as a sulfurtransferase that transfers sulfur from thiocarboxylated URM1 onto the uridine of tRNAs at wobble position. This is Cytoplasmic tRNA 2-thiolation protein 1 from Chlamydomonas reinhardtii (Chlamydomonas smithii).